The sequence spans 36 residues: Photosystem I reaction center subunit VIII (36 aa).

The chain crosses the membrane as a helical span at residues 7-29 (PSILVPLVGLVFPAITLASLFIY).

This sequence belongs to the PsaI family.

Its subcellular location is the plastid. It localises to the chloroplast thylakoid membrane. Its function is as follows. May help in the organization of the PsaL subunit. The chain is Photosystem I reaction center subunit VIII from Anthoceros angustus (Hornwort).